We begin with the raw amino-acid sequence, 328 residues long: dITP/XTP pyrophosphatase (328 aa).

A unknown region spans residues 1–129; it reads MSEKIYEYKD…ATSEQGFGDI (129 aa). The tract at residues 130 to 324 is NTP pyrophosphatase; it reads ILIATRNEGK…KLMEVFPAWQ (195 aa). 134–139 contacts substrate; it reads TRNEGK. The Proton acceptor role is filled by Asp-196. Asp-196 provides a ligand contact to Mg(2+). Residues Ser-197, 280–283, Lys-303, and 308–309 contribute to the substrate site; these read FGYD and HR.

The protein belongs to the HAM1 NTPase family. As to quaternary structure, homodimer. The cofactor is Mg(2+).

The enzyme catalyses XTP + H2O = XMP + diphosphate + H(+). It carries out the reaction dITP + H2O = dIMP + diphosphate + H(+). It catalyses the reaction ITP + H2O = IMP + diphosphate + H(+). In terms of biological role, pyrophosphatase that catalyzes the hydrolysis of nucleoside triphosphates to their monophosphate derivatives, with a high preference for the non-canonical purine nucleotides XTP (xanthosine triphosphate), dITP (deoxyinosine triphosphate) and ITP. Seems to function as a house-cleaning enzyme that removes non-canonical purine nucleotides from the nucleotide pool, thus preventing their incorporation into DNA/RNA and avoiding chromosomal lesions. The sequence is that of dITP/XTP pyrophosphatase from Streptococcus pyogenes serotype M1.